Consider the following 154-residue polypeptide: MSLGGGGQQQLQQLSQEIQAIEEEVEELEADVASLRQEQTEIEEAKEALDVLETGATVQVPLGGDAYVRAEVKDMDEVVVSLGGGYAAEQDSDAAASVLDEKKATIDGRIDDVQAEIADLSEEAEQLEQQAQQAQQQMMQQQMQAQQQPQDGEQ.

A disordered region spans residues 123–154 (EAEQLEQQAQQAQQQMMQQQMQAQQQPQDGEQ). Residues 127-154 (LEQQAQQAQQQMMQQQMQAQQQPQDGEQ) are compositionally biased toward low complexity.

The protein belongs to the prefoldin alpha subunit family. As to quaternary structure, heterohexamer of two alpha and four beta subunits.

The protein resides in the cytoplasm. Molecular chaperone capable of stabilizing a range of proteins. Seems to fulfill an ATP-independent, HSP70-like function in archaeal de novo protein folding. This is Prefoldin subunit alpha from Halobacterium salinarum (strain ATCC 29341 / DSM 671 / R1).